A 326-amino-acid chain; its full sequence is Beta-ketoacyl-[acyl-carrier-protein] synthase III 2 (326 aa).

Catalysis depends on residues Cys114 and His251. Residues 252-256 are ACP-binding; that stretch reads SANAR. Asn281 is a catalytic residue.

It belongs to the thiolase-like superfamily. FabH family. In terms of assembly, homodimer.

The protein resides in the cytoplasm. The catalysed reaction is malonyl-[ACP] + acetyl-CoA + H(+) = 3-oxobutanoyl-[ACP] + CO2 + CoA. It participates in lipid metabolism; fatty acid biosynthesis. In terms of biological role, catalyzes the condensation reaction of fatty acid synthesis by the addition to an acyl acceptor of two carbons from malonyl-ACP. Catalyzes the first condensation reaction which initiates fatty acid synthesis and may therefore play a role in governing the total rate of fatty acid production. Possesses both acetoacetyl-ACP synthase and acetyl transacylase activities. Its substrate specificity determines the biosynthesis of branched-chain and/or straight-chain of fatty acids. In Staphylococcus epidermidis (strain ATCC 12228 / FDA PCI 1200), this protein is Beta-ketoacyl-[acyl-carrier-protein] synthase III 2.